The sequence spans 177 residues: R-phycoerythrin beta chain (177 aa).

Residues Cys50 and Cys61 each coordinate phycourobilin. N4-methylasparagine is present on Asn72. (2R,3E)-phycoerythrobilin contacts are provided by Cys82 and Cys158.

Belongs to the phycobiliprotein family. As to quaternary structure, heterodimer of an alpha and a beta chain. In terms of processing, contains two covalently linked phycoerythrobilin chromophores and one covalently linked phycourobilin chromophore.

It localises to the plastid. It is found in the chloroplast thylakoid membrane. Functionally, light-harvesting photosynthetic bile pigment-protein from the phycobiliprotein complex. This chain is R-phycoerythrin beta chain (cpeB), found in Lophosiphonia boldii (Red alga).